The chain runs to 205 residues: SCO2-like protein RP587 (205 aa).

Cys-82, Cys-86, and His-172 together coordinate Cu cation.

It belongs to the SCO1/2 family.

This is SCO2-like protein RP587 from Rickettsia prowazekii (strain Madrid E).